We begin with the raw amino-acid sequence, 1733 residues long: Gag-Pol polyprotein (1733 aa).

Gly2 carries the N-myristoyl glycine; by host lipid modification. The PTAP/PSAP motif signature appears at Pro109 to Pro112. Pro residues predominate over residues Pro112–Ser121. 2 disordered regions span residues Pro112–Leu196 and Leu202–Gly221. The short motif at Leu128–Leu132 is the LYPX(n)L motif element. Residues Asp159–Pro170 show a composition bias toward pro residues. The PPXY motif motif lies at Pro160 to Tyr163. Ser190 is subject to Phosphoserine; by host. An interaction with host PIAS4 region spans residues Gly343–Val391. Residues Ile428–Glu433 form an interaction with host UBE2I region. 2 stretches are compositionally biased toward basic and acidic residues: residues Arg432 to Arg464 and Lys484 to Gln496. Disordered regions lie at residues Arg432 to Gln496 and Trp511 to Ile550. The stretch at Glu436–Leu476 forms a coiled coil. The CCHC-type zinc finger occupies Asp500–Lys517. The region spanning Val559–Leu629 is the Peptidase A2 domain. The Protease; shared with dimeric partner role is filled by Asp564. The region spanning Leu739 to Leu930 is the Reverse transcriptase domain. Mg(2+) is bound by residues Asp807, Asp881, Asp882, Asp1181, Glu1219, Asp1240, and Asp1310. Residues Pro1172 to Thr1318 enclose the RNase H type-1 domain. The segment at His1385–Cys1425 adopts an HHCC-type zinc-finger fold. Residues Arg1442 to Pro1600 form the Integrase catalytic domain. Mg(2+) is bound by residues Asp1453 and Asp1512.

As to quaternary structure, homohexamer; further associates as homomultimer. The virus core is composed of a lattice formed from hexagonal rings, each containing six capsid monomers. Interacts with mouse UBE2I and mouse PIAS4. Interacts (via PPXY motif) with host NEDD4. Interacts (via PSAP motif) with host TSG101. Interacts (via LYPX(n)L motif) with host PDCD6IP. In terms of assembly, the reverse transcriptase is a monomer (Potential). Interacts (via RNase domains) with host release factor ETF1; this interaction is essential for translational readthrough of amber codon between viral gag and pol genes, as well as for viral replication. As to quaternary structure, homodimer. Requires Mg(2+) as cofactor. In terms of processing, ubiquitinated by ITCH. Gag can recruit the ubiquitin ligase Itch in an L domain-independent manner to facilitate virus release via a mechanism that involves Gag ubiquitination. Post-translationally, specific enzymatic cleavages by the viral protease yield mature proteins. The protease is released by autocatalytic cleavage. The polyprotein is cleaved during and after budding, this process is termed maturation. Sumoylated; which is required for virus replication. In terms of processing, phosphorylated on serine residues.

It localises to the virion. The protein localises to the host cell membrane. The protein resides in the host late endosome membrane. Its subcellular location is the host endosome. It is found in the host multivesicular body. It localises to the host cytoplasm. The enzyme catalyses DNA(n) + a 2'-deoxyribonucleoside 5'-triphosphate = DNA(n+1) + diphosphate. The catalysed reaction is Endonucleolytic cleavage to 5'-phosphomonoester.. With respect to regulation, most efficiently inhibited by Amprenavir, which is able to block Gag-Pol processing in infected cells. Plays a role in budding and is processed by the viral protease during virion maturation outside the cell. During budding, it recruits, in a PPXY-dependent or independent manner, Nedd4-like ubiquitin ligases that conjugate ubiquitin molecules to Gag-Pol, or to Gag-Pol binding host factors. Interaction with HECT ubiquitin ligases probably links the viral protein to the host ESCRT pathway and facilitates release. Its function is as follows. Targets Gag and gag-pol polyproteins to the plasma membrane via a multipartite membrane binding signal, that includes its myristoylated N-terminus. Also mediates nuclear localization of the pre-integration complex. Functionally, constituent of the pre-integration complex (PIC) which tethers the latter to mitotic chromosomes. This allows the integration of the viral genome into the host DNA. In terms of biological role, forms the spherical core of the virion that encapsulates the genomic RNA-nucleocapsid complex. Involved in the packaging and encapsidation of two copies of the genome. Binds with high affinity to conserved UCUG elements within the packaging signal, located near the 5'-end of the genome. This binding is dependent on genome dimerization. Acts as a nucleic acid chaperone which is involved in rearrangement of nucleic acid secondary structures during gRNA retrotranscription. Its function is as follows. The aspartyl protease mediates proteolytic cleavages of Gag and Gag-Pol polyproteins during or shortly after the release of the virion from the plasma membrane. Cleavages take place as an ordered, step-wise cascade to yield mature proteins. This process is called maturation. Displays maximal activity during the budding process just prior to particle release from the cell (Potential). Cleaves the translation initiation factor eIF4G leading to the inhibition of host cap-dependent translation. Functionally, RT is a multifunctional enzyme that converts the viral dimeric RNA genome into dsDNA in the cytoplasm, shortly after virus entry into the cell. This enzyme displays a DNA polymerase activity that can copy either DNA or RNA templates, and a ribonuclease H (RNase H) activity that cleaves the RNA strand of RNA-DNA heteroduplexes in a partially processive 3' to 5' endonucleasic mode. Conversion of viral genomic RNA into dsDNA requires many steps. A tRNA binds to the primer-binding site (PBS) situated at the 5' end of the viral RNA. RT uses the 3' end of the tRNA primer to perform a short round of RNA-dependent minus-strand DNA synthesis. The reading proceeds through the U5 region and ends after the repeated (R) region which is present at both ends of viral RNA. The portion of the RNA-DNA heteroduplex is digested by the RNase H, resulting in a ssDNA product attached to the tRNA primer. This ssDNA/tRNA hybridizes with the identical R region situated at the 3' end of viral RNA. This template exchange, known as minus-strand DNA strong stop transfer, can be either intra- or intermolecular. RT uses the 3' end of this newly synthesized short ssDNA to perform the RNA-dependent minus-strand DNA synthesis of the whole template. RNase H digests the RNA template except for a polypurine tract (PPT) situated at the 5' end of the genome. It is not clear if both polymerase and RNase H activities are simultaneous. RNase H probably can proceed both in a polymerase-dependent (RNA cut into small fragments by the same RT performing DNA synthesis) and a polymerase-independent mode (cleavage of remaining RNA fragments by free RTs). Secondly, RT performs DNA-directed plus-strand DNA synthesis using the PPT that has not been removed by RNase H as primers. PPT and tRNA primers are then removed by RNase H. The 3' and 5' ssDNA PBS regions hybridize to form a circular dsDNA intermediate. Strand displacement synthesis by RT to the PBS and PPT ends produces a blunt ended, linear dsDNA copy of the viral genome that includes long terminal repeats (LTRs) at both ends. In terms of biological role, catalyzes viral DNA integration into the host chromosome, by performing a series of DNA cutting and joining reactions. This enzyme activity takes place after virion entry into a cell and reverse transcription of the RNA genome in dsDNA. The first step in the integration process is 3' processing. This step requires a complex comprising the viral genome, matrix protein and integrase. This complex is called the pre-integration complex (PIC). The integrase protein removes 2 nucleotides from each 3' end of the viral DNA, leaving recessed CA OH's at the 3' ends. In the second step that requires cell division, the PIC enters cell nucleus. In the third step, termed strand transfer, the integrase protein joins the previously processed 3' ends to the 5' ends of strands of target cellular DNA at the site of integration. The last step is viral DNA integration into host chromosome. In Cas-Br-E murine leukemia virus, this protein is Gag-Pol polyprotein (gag-pol).